Consider the following 267-residue polypeptide: 3-methyl-2-oxobutanoate hydroxymethyltransferase (267 aa).

Residues Asp-42 and Asp-86 each coordinate Mg(2+). 3-methyl-2-oxobutanoate-binding positions include 42–43, Asp-86, and Lys-116; that span reads DS. Glu-118 lines the Mg(2+) pocket. The active-site Proton acceptor is Glu-185.

The protein belongs to the PanB family. In terms of assembly, homodecamer; pentamer of dimers. Requires Mg(2+) as cofactor.

The protein localises to the cytoplasm. The enzyme catalyses 3-methyl-2-oxobutanoate + (6R)-5,10-methylene-5,6,7,8-tetrahydrofolate + H2O = 2-dehydropantoate + (6S)-5,6,7,8-tetrahydrofolate. It functions in the pathway cofactor biosynthesis; (R)-pantothenate biosynthesis; (R)-pantoate from 3-methyl-2-oxobutanoate: step 1/2. Catalyzes the reversible reaction in which hydroxymethyl group from 5,10-methylenetetrahydrofolate is transferred onto alpha-ketoisovalerate to form ketopantoate. This is 3-methyl-2-oxobutanoate hydroxymethyltransferase from Parasynechococcus marenigrum (strain WH8102).